We begin with the raw amino-acid sequence, 30 residues long: Cyclotide cter-H (30 aa).

The cyclopeptide (Gly-Asp) cross-link spans 1–30; it reads GLPCGESCVFIPCITTVVGCSCKNKVCYND. 3 cysteine pairs are disulfide-bonded: Cys4-Cys20, Cys8-Cys22, and Cys13-Cys27.

Post-translationally, contains 3 disulfide bonds. In terms of processing, this is a cyclic peptide.

Its function is as follows. Probably participates in a plant defense mechanism. This chain is Cyclotide cter-H, found in Clitoria ternatea (Butterfly pea).